The following is a 180-amino-acid chain: NADH-quinone oxidoreductase subunit I (180 aa).

2 4Fe-4S ferredoxin-type domains span residues 50 to 80 (LTRD…LQKA) and 90 to 119 (EFFR…MTPD). [4Fe-4S] cluster is bound by residues cysteine 60, cysteine 63, cysteine 66, cysteine 70, cysteine 99, cysteine 102, cysteine 105, and cysteine 109.

The protein belongs to the complex I 23 kDa subunit family. In terms of assembly, NDH-1 is composed of 14 different subunits. Subunits NuoA, H, J, K, L, M, N constitute the membrane sector of the complex. The cofactor is [4Fe-4S] cluster.

The protein resides in the cell inner membrane. It catalyses the reaction a quinone + NADH + 5 H(+)(in) = a quinol + NAD(+) + 4 H(+)(out). Functionally, NDH-1 shuttles electrons from NADH, via FMN and iron-sulfur (Fe-S) centers, to quinones in the respiratory chain. The immediate electron acceptor for the enzyme in this species is believed to be ubiquinone. Couples the redox reaction to proton translocation (for every two electrons transferred, four hydrogen ions are translocated across the cytoplasmic membrane), and thus conserves the redox energy in a proton gradient. The protein is NADH-quinone oxidoreductase subunit I of Acinetobacter baylyi (strain ATCC 33305 / BD413 / ADP1).